The sequence spans 208 residues: Small ribosomal subunit protein uS4 (208 aa).

The 62-residue stretch at 97 to 158 (TRLDNVIYRM…RAQKYLCVQE (62 aa)) folds into the S4 RNA-binding domain.

Belongs to the universal ribosomal protein uS4 family. As to quaternary structure, part of the 30S ribosomal subunit. Contacts protein S5. The interaction surface between S4 and S5 is involved in control of translational fidelity.

Functionally, one of the primary rRNA binding proteins, it binds directly to 16S rRNA where it nucleates assembly of the body of the 30S subunit. With S5 and S12 plays an important role in translational accuracy. The protein is Small ribosomal subunit protein uS4 of Xylella fastidiosa (strain M12).